The primary structure comprises 198 residues: ATP-dependent Clp protease proteolytic subunit (198 aa).

Catalysis depends on S103, which acts as the Nucleophile. H128 is a catalytic residue.

This sequence belongs to the peptidase S14 family. In terms of assembly, fourteen ClpP subunits assemble into 2 heptameric rings which stack back to back to give a disk-like structure with a central cavity, resembling the structure of eukaryotic proteasomes.

It localises to the cytoplasm. It catalyses the reaction Hydrolysis of proteins to small peptides in the presence of ATP and magnesium. alpha-casein is the usual test substrate. In the absence of ATP, only oligopeptides shorter than five residues are hydrolyzed (such as succinyl-Leu-Tyr-|-NHMec, and Leu-Tyr-Leu-|-Tyr-Trp, in which cleavage of the -Tyr-|-Leu- and -Tyr-|-Trp bonds also occurs).. Functionally, cleaves peptides in various proteins in a process that requires ATP hydrolysis. Has a chymotrypsin-like activity. Plays a major role in the degradation of misfolded proteins. The chain is ATP-dependent Clp protease proteolytic subunit from Ruthia magnifica subsp. Calyptogena magnifica.